The chain runs to 178 residues: Large ribosomal subunit protein uL6 (178 aa).

The protein belongs to the universal ribosomal protein uL6 family. As to quaternary structure, part of the 50S ribosomal subunit.

This protein binds to the 23S rRNA, and is important in its secondary structure. It is located near the subunit interface in the base of the L7/L12 stalk, and near the tRNA binding site of the peptidyltransferase center. The chain is Large ribosomal subunit protein uL6 from Coxiella burnetii (strain CbuG_Q212) (Coxiella burnetii (strain Q212)).